The following is a 228-amino-acid chain: MSTETNPGLAQRRLWQLISPTLPIGAYSYSAGLEYAVEAGWLRNADAVADWLQGQLHHALAPVDIPALARLHAAWQSDDAVAVHYWSQWLRACRETKELREEDRHVGQALARLLRDLDLPEAAPWVDDPIAGWPTLYALAVARWAIPLETAAEAYLWAWCENQVSAAIKLVPLGQTAGQRLLLEMAEPVGEAARQGLALEDEEMGGGLPGVALASSLHETQYSRLFRS.

Belongs to the UreF family. UreD, UreF and UreG form a complex that acts as a GTP-hydrolysis-dependent molecular chaperone, activating the urease apoprotein by helping to assemble the nickel containing metallocenter of UreC. The UreE protein probably delivers the nickel.

Its subcellular location is the cytoplasm. Functionally, required for maturation of urease via the functional incorporation of the urease nickel metallocenter. The protein is Urease accessory protein UreF of Alkalilimnicola ehrlichii (strain ATCC BAA-1101 / DSM 17681 / MLHE-1).